The primary structure comprises 258 residues: MNKLALQGPLWLASDLHLGPATPATAEAFLGLLQAAADEASALLLPGDIFDAWIGDDVIRAAPPWLAAVLQGIRAAAGRIPVYLGRGNRDFLIGQELADALGAHLLPEPVLLETDYGRILLTHGDEYCTDDSAYQQFRAMVRNPQWQAQFLAMSIPERLAMAEQARGESQAANQAKSMEIMDVNPASVEAALREADVDVLVHGHTHRPARHVLSVDGRKRERWVLPDWDCDHADPPRGGWLVIDRDGLQCFDLVEDED.

Aspartate 15, histidine 17, aspartate 48, asparagine 88, and histidine 123 together coordinate Mn(2+). 88–89 contacts substrate; sequence NR. Substrate is bound by residues aspartate 131, serine 169, asparagine 173, lysine 176, and histidine 204. The Mn(2+) site is built by histidine 204 and histidine 206.

The protein belongs to the LpxH family. It depends on Mn(2+) as a cofactor.

It is found in the cell inner membrane. The enzyme catalyses UDP-2-N,3-O-bis[(3R)-3-hydroxytetradecanoyl]-alpha-D-glucosamine + H2O = 2-N,3-O-bis[(3R)-3-hydroxytetradecanoyl]-alpha-D-glucosaminyl 1-phosphate + UMP + 2 H(+). It participates in glycolipid biosynthesis; lipid IV(A) biosynthesis; lipid IV(A) from (3R)-3-hydroxytetradecanoyl-[acyl-carrier-protein] and UDP-N-acetyl-alpha-D-glucosamine: step 4/6. Its function is as follows. Hydrolyzes the pyrophosphate bond of UDP-2,3-diacylglucosamine to yield 2,3-diacylglucosamine 1-phosphate (lipid X) and UMP by catalyzing the attack of water at the alpha-P atom. Involved in the biosynthesis of lipid A, a phosphorylated glycolipid that anchors the lipopolysaccharide to the outer membrane of the cell. The sequence is that of UDP-2,3-diacylglucosamine hydrolase from Bordetella bronchiseptica (strain ATCC BAA-588 / NCTC 13252 / RB50) (Alcaligenes bronchisepticus).